We begin with the raw amino-acid sequence, 430 residues long: Glial fibrillary acidic protein (430 aa).

Residues 1-31 (MERRRITSARRSYASSETMVRGHGPTRHLGT) are disordered. A head region spans residues 1–70 (MERRRITSAR…KETRASERAE (70 aa)). At Thr7 the chain carries Phosphothreonine; by AURKB and ROCK1. Positions 9 to 18 (ARRSYASSET) are enriched in polar residues. Position 11 is an omega-N-methylarginine (Arg11). Ser12 carries the phosphoserine modification. At Arg21 the chain carries Omega-N-methylarginine. Arg34 carries the post-translational modification Citrulline. Ser36 bears the Phosphoserine; by AURKB and ROCK1 mark. Residue Thr41 is modified to Phosphothreonine. The 309-residue stretch at 67–375 (ERAEMMELND…KLLEGEENRI (309 aa)) folds into the IF rod domain. The coil 1A stretch occupies residues 71–102 (MMELNDRFASYIEKVRFLEQQNKALAAELNQL). The residue at position 80 (Ser80) is a Phosphoserine. The interval 103-113 (RAKEPTKLADV) is linker 1. Residues Thr108 and Thr148 each carry the phosphothreonine modification. The interval 114–212 (YQAELRELRL…EEEVRELQEQ (99 aa)) is coil 1B. The linker 12 stretch occupies residues 213-228 (LAQQQVHVEMDVAKPD). A coil 2A region spans residues 229–250 (LTAALREIRTQYEAVATSNMQE). Residues 251-254 (TEEW) are linker 2. Residues 255–375 (YRSKFADLTD…KLLEGEENRI (121 aa)) are coil 2B. Ser267 carries the post-translational modification Phosphoserine. Arg268 carries the citrulline modification. Ser321 carries the post-translational modification Phosphoserine. Residues 376–430 (TIPVQTFSNLQIRETSLDTKSVSEGHLKRNIVVKTVEMRDGEVIKESKQEHKDVM) are tail. Phosphothreonine is present on Thr381. Residue Ser383 is modified to Phosphoserine. Arg404 and Arg414 each carry citrulline.

This sequence belongs to the intermediate filament family. As to quaternary structure, interacts with SYNM. Interacts with PSEN1 (via N-terminus). Phosphorylated by PKN1. As to expression, expressed in the cortex and hippocampus. Expression decreases following acute and chronic corticosterone treatment.

Its subcellular location is the cytoplasm. Functionally, GFAP, a class-III intermediate filament, is a cell-specific marker that, during the development of the central nervous system, distinguishes astrocytes from other glial cells. The protein is Glial fibrillary acidic protein (Gfap) of Rattus norvegicus (Rat).